Consider the following 81-residue polypeptide: MNPLIAAASVIAAGLAVGLASIGPGVGQGTAAGQAVEGIARQPEAEDKIRGTLLLSLAFMEALTIYGLVVALALLFANPFV.

A run of 2 helical transmembrane segments spans residues 3–23 and 57–77; these read PLIA…ASIG and LAFM…LLFA.

Belongs to the ATPase C chain family. As to quaternary structure, F-type ATPases have 2 components, F(1) - the catalytic core - and F(0) - the membrane proton channel. F(1) has five subunits: alpha(3), beta(3), gamma(1), delta(1), epsilon(1). F(0) has four main subunits: a(1), b(1), b'(1) and c(10-14). The alpha and beta chains form an alternating ring which encloses part of the gamma chain. F(1) is attached to F(0) by a central stalk formed by the gamma and epsilon chains, while a peripheral stalk is formed by the delta, b and b' chains.

Its subcellular location is the plastid. The protein localises to the chloroplast thylakoid membrane. In terms of biological role, f(1)F(0) ATP synthase produces ATP from ADP in the presence of a proton or sodium gradient. F-type ATPases consist of two structural domains, F(1) containing the extramembraneous catalytic core and F(0) containing the membrane proton channel, linked together by a central stalk and a peripheral stalk. During catalysis, ATP synthesis in the catalytic domain of F(1) is coupled via a rotary mechanism of the central stalk subunits to proton translocation. Its function is as follows. Key component of the F(0) channel; it plays a direct role in translocation across the membrane. A homomeric c-ring of between 10-14 subunits forms the central stalk rotor element with the F(1) delta and epsilon subunits. The protein is ATP synthase subunit c, chloroplastic of Pisum sativum (Garden pea).